Consider the following 85-residue polypeptide: UPF0335 protein Oant_1161 (85 aa).

Belongs to the UPF0335 family.

This is UPF0335 protein Oant_1161 from Brucella anthropi (strain ATCC 49188 / DSM 6882 / CCUG 24695 / JCM 21032 / LMG 3331 / NBRC 15819 / NCTC 12168 / Alc 37) (Ochrobactrum anthropi).